The following is a 300-amino-acid chain: tRNA dimethylallyltransferase (300 aa).

ATP is bound at residue glycine 9–threonine 16. Residue threonine 11–threonine 16 participates in substrate binding. The interaction with substrate tRNA stretch occupies residues aspartate 34–glutamine 37.

It belongs to the IPP transferase family. Monomer. Requires Mg(2+) as cofactor.

The enzyme catalyses adenosine(37) in tRNA + dimethylallyl diphosphate = N(6)-dimethylallyladenosine(37) in tRNA + diphosphate. Catalyzes the transfer of a dimethylallyl group onto the adenine at position 37 in tRNAs that read codons beginning with uridine, leading to the formation of N6-(dimethylallyl)adenosine (i(6)A). The sequence is that of tRNA dimethylallyltransferase from Anaeromyxobacter sp. (strain Fw109-5).